The sequence spans 457 residues: Siroheme synthase (457 aa).

Residues 1-204 (MDHLPIFCQL…NDQKAITETT (204 aa)) are precorrin-2 dehydrogenase /sirohydrochlorin ferrochelatase. Residues 22 to 23 (DV) and 43 to 44 (LA) each bind NAD(+). The residue at position 128 (serine 128) is a Phosphoserine. The segment at 216-457 (GEVVLVGAGP…RDKLNWFSNH (242 aa)) is uroporphyrinogen-III C-methyltransferase. Residue proline 225 coordinates S-adenosyl-L-methionine. The active-site Proton acceptor is the aspartate 248. Lysine 270 acts as the Proton donor in catalysis. Residues 301–303 (GGD), isoleucine 306, 331–332 (TA), methionine 382, and glycine 411 each bind S-adenosyl-L-methionine.

The protein in the N-terminal section; belongs to the precorrin-2 dehydrogenase / sirohydrochlorin ferrochelatase family. It in the C-terminal section; belongs to the precorrin methyltransferase family.

The enzyme catalyses uroporphyrinogen III + 2 S-adenosyl-L-methionine = precorrin-2 + 2 S-adenosyl-L-homocysteine + H(+). It catalyses the reaction precorrin-2 + NAD(+) = sirohydrochlorin + NADH + 2 H(+). It carries out the reaction siroheme + 2 H(+) = sirohydrochlorin + Fe(2+). It functions in the pathway cofactor biosynthesis; adenosylcobalamin biosynthesis; precorrin-2 from uroporphyrinogen III: step 1/1. Its pathway is cofactor biosynthesis; adenosylcobalamin biosynthesis; sirohydrochlorin from precorrin-2: step 1/1. The protein operates within porphyrin-containing compound metabolism; siroheme biosynthesis; precorrin-2 from uroporphyrinogen III: step 1/1. It participates in porphyrin-containing compound metabolism; siroheme biosynthesis; siroheme from sirohydrochlorin: step 1/1. It functions in the pathway porphyrin-containing compound metabolism; siroheme biosynthesis; sirohydrochlorin from precorrin-2: step 1/1. Functionally, multifunctional enzyme that catalyzes the SAM-dependent methylations of uroporphyrinogen III at position C-2 and C-7 to form precorrin-2 via precorrin-1. Then it catalyzes the NAD-dependent ring dehydrogenation of precorrin-2 to yield sirohydrochlorin. Finally, it catalyzes the ferrochelation of sirohydrochlorin to yield siroheme. In Escherichia coli O157:H7 (strain EC4115 / EHEC), this protein is Siroheme synthase.